The following is a 1400-amino-acid chain: MTKEIAVKEASNMLLQEPSTPSSQAVGLSSSPSSSIRKKKVNFSSELENSPGGNRPSFGLPKRGILKTSTPLSSIKQPNFQSFEGNESEKETSLQELQSSFCSGIENLQHVEKSARIETYSKLSSFLKIYTPSLPEDPIFPLLNQLCNFLLSDRCSNNSEGSPDFQLNTQANKLLSILLWHPTISSHIQPETATVFIEQSLNFLEGPKLTKALAAQHLHLLSCQKCPLSIHPLCNRILDVCFNISFPSLVIGQERLAVLTKILSQFPLEFSRRVVDWAPYLLACLVDASRPIREKALLLALDLSKHLYHDKLVARTILANFRSDIKGTAFVLIMTEQFEKLVIEEDDGVYVAHAWAAIISVLGGARISSWEYFNTWLKIIQLCFNSMNPLTKCAAQTSWIRLIHEFSLSETLTQATKRLTLLCQPISMVLGSRNLPTVKNAAMTTLIALIYACLRPGISDAMLSLLWDSVIVNILEKCALKNEVTIFESSNILLALFNTLSNGVWKDDRLVCRESVEAKELPKLNPVWVRANCSRTIEPVKTLLLLAKPDHTVKTTTPARKQHIRGLSYEQSSSVWSTYIKCLASAGQKEIKRSVETGRAICCICSSLHKFLYSKSIRKDELYVERVSRFALMVKSAIEAFGINTFVEASYLVSDNQLVLIDQTKAIDSYDHVPISPLIYLLHSLALLTNGTLFSTVHAAYSSILSSIEEYHLRFGLKLMLLWDCVSPLSDDGTLVLARVLVSHEVSRLTSEALLSELKSRNGNNSVEEGFSEEERSILLKLLSWNVKFCSISDAGSVNNLLQQYFTAIYKFEGCGSVFPFVVDPFTTILDDVLSFEANKVYSFAISLMKVSTFESCTKELPPVTLPENIRQHLDSYNHMVELYNTLLQRLSSSDQVDLQCRYLHELSEFIKKIPKEFIFHTICKLSKGLIPCFLMNAFPQLEKSTTLQKSCTNFCILILQLLLNSTATASNILESLSPLLTSGLKSISKEVVLAAIKFWNQVFGKFESEEYPIELQKTISYLSKTYIILLPFQSLCPGGKQANHQSSEKMSDILKGVDELRSVSKNGPYASSQDKGEKTTEFSGPGKPNNDNYIQIASVQELDDSSKGKAGKMPASKKNKRQKGDVKKIDETKNEATDMEESLTTPSGKVNKEVIVDDTSLRDEAIVPDKAIDVADNSNALLKENISSQSNRKADNNGTPSVNNSFTTANNDECSKENSQIEPEGQTASREGVLSTPRSTRKKRKLGRKSQSSNVNKEVAISEVSATLENVEVIERHGISEQGQNLDESACVLTNESSLSQTEIPEEKTENETTAVNGFENSKKRQFSSLLSGSIDTNNESNKVSSVEFDKSGPQDIIQSMTEATFEIEKNIQDLKSEEVQKLSDLLMRLQRAILSRIA.

Disordered stretches follow at residues 1–63 and 1065–1258; these read MTKE…LPKR and SKNG…NVNK. Positions 22 to 35 are enriched in low complexity; it reads SSQAVGLSSSPSSS. 3 stretches are compositionally biased toward polar residues: residues 42–52, 1065–1074, and 1090–1099; these read NFSSELENSPG, SKNGPYASSQ, and NNDNYIQIAS. 2 stretches are compositionally biased toward basic and acidic residues: residues 1123–1137 and 1151–1174; these read QKGD…KNEA and VNKE…KAID. Over residues 1177–1230 the composition is skewed to polar residues; sequence DNSNALLKENISSQSNRKADNNGTPSVNNSFTTANNDECSKENSQIEPEGQTAS. Residues 1240–1249 are compositionally biased toward basic residues; sequence STRKKRKLGR.

The protein belongs to the RIF1 family. In terms of assembly, recruited to telomeres by interaction with taz1. Does not interact with rap1, unlike the orthologous protein of budding yeast.

The protein resides in the nucleus. The protein localises to the chromosome. It localises to the telomere. Functionally, negatively regulates telomere length. Appears to play no role in transcriptional silencing of telomeric loci. The protein is Telomere length regulator protein rif1 (rif1) of Schizosaccharomyces pombe (strain 972 / ATCC 24843) (Fission yeast).